The sequence spans 708 residues: Glycogen [starch] synthase isoform 1 (708 aa).

Position 20 (R20) interacts with UDP. Position 159 is a phosphoserine (S159). 2 residues coordinate UDP-alpha-D-glucose: H193 and R199. Alpha-D-glucose 6-phosphate contacts are provided by H280, E281, Q283, H286, and K290. R320 contributes to the UDP binding site. R320 provides a ligand contact to UDP-alpha-D-glucose. S363 bears the Phosphoserine mark. An alpha-D-glucose 6-phosphate-binding site is contributed by H500. UDP-alpha-D-glucose is bound by residues E509, W511, and G512. UDP is bound at residue T514. S560 carries the post-translational modification Phosphoserine. Positions 583 and 587 each coordinate alpha-D-glucose 6-phosphate. A phosphoserine mark is found at S651 and S655. Phosphoserine; by PKA is present on residues S660 and S662. The segment at 687–708 (STNGAIDNDDDDNDTSAYYEDN) is disordered. Acidic residues predominate over residues 693 to 708 (DNDDDDNDTSAYYEDN).

The protein belongs to the glycosyltransferase 3 family.

It carries out the reaction [(1-&gt;4)-alpha-D-glucosyl](n) + UDP-alpha-D-glucose = [(1-&gt;4)-alpha-D-glucosyl](n+1) + UDP + H(+). Its pathway is glycan biosynthesis; glycogen biosynthesis. Allosteric activation by glucose-6-phosphate, and phosphorylation by a cAMP-dependent kinase. Glycogen synthase participates in the glycogen biosynthetic process along with glycogenin and glycogen branching enzyme. Extends the primer composed of a few glucose units formed by glycogenin by adding new glucose units to it. In this context, glycogen synthase transfers the glycosyl residue from UDP-Glc to the non-reducing end of alpha-1,4-glucan. The polypeptide is Glycogen [starch] synthase isoform 1 (GSY1) (Saccharomyces cerevisiae (strain ATCC 204508 / S288c) (Baker's yeast)).